A 317-amino-acid polypeptide reads, in one-letter code: Melanocyte-stimulating hormone receptor (317 aa).

Over 1-37 (MPMQGAQRKLLGSLNSTPTATSNLGLAANHTGAPCLE) the chain is Extracellular. N-linked (GlcNAc...) asparagine glycosylation is present at Asn-29. Residues 38–63 (VSIPDGLFLSLGLVSLVENVLVVAAV) traverse the membrane as a helical segment. Residues 64–72 (AKNRNLHSS) are Cytoplasmic-facing. A helical membrane pass occupies residues 73 to 93 (MYCFICCLALSDLLVSGSNML). Over 94 to 118 (ETAVILLLETGALATRTSVVQQLHN) the chain is Extracellular. A helical transmembrane segment spans residues 119–140 (TINVLTCSSMLCSLCFLGAIAV). The Cytoplasmic segment spans residues 141 to 163 (DRYISIFYALRYHSIMTLPRAQR). The chain crosses the membrane as a helical span at residues 164–183 (AIAAIWVASVLSSTLFITYY). The Extracellular segment spans residues 184–191 (DHAAVLLC). Residues 192–211 (LVVFFLAMLVLMAVLYVHML) form a helical membrane-spanning segment. Residues 212–240 (ARACQHAHGIIRLHKRQTPAHQGFGLRGA) lie on the Cytoplasmic side of the membrane. A helical membrane pass occupies residues 241–266 (ATLTILLGIFFLCWGPFFLHLTLVVF). The Extracellular portion of the chain corresponds to 267–279 (CPQHLTCSCIFKN). The chain crosses the membrane as a helical span at residues 280 to 300 (FKVFLTLIICNTIIDPLIYAF). The Cytoplasmic portion of the chain corresponds to 301–317 (RSQELRRTLKEVLLCSW). A lipid anchor (S-palmitoyl cysteine) is attached at Cys-315.

It belongs to the G-protein coupled receptor 1 family. In terms of assembly, interacts with MGRN1, but does not undergo MGRN1-mediated ubiquitination; this interaction competes with GNAS-binding and thus inhibits agonist-induced cAMP production. Interacts with OPN3; the interaction results in a decrease in MC1R-mediated cAMP signaling and ultimately a decrease in melanin production in melanocytes.

It is found in the cell membrane. Functionally, receptor for MSH (alpha, beta and gamma) and ACTH. The activity of this receptor is mediated by G proteins which activate adenylate cyclase. Mediates melanogenesis, the production of eumelanin (black/brown) and phaeomelanin (red/yellow), via regulation of cAMP signaling in melanocytes. The protein is Melanocyte-stimulating hormone receptor (MC1R) of Saguinus oedipus (Cotton-top tamarin).